A 93-amino-acid polypeptide reads, in one-letter code: Putative regulatory protein LA_2599 (93 aa).

This sequence belongs to the RemA family.

The polypeptide is Putative regulatory protein LA_2599 (Leptospira interrogans serogroup Icterohaemorrhagiae serovar Lai (strain 56601)).